Here is a 115-residue protein sequence, read N- to C-terminus: UPF0738 protein SSP1780 (115 aa).

It belongs to the UPF0738 family.

This chain is UPF0738 protein SSP1780, found in Staphylococcus saprophyticus subsp. saprophyticus (strain ATCC 15305 / DSM 20229 / NCIMB 8711 / NCTC 7292 / S-41).